The primary structure comprises 147 residues: MAIVYLSLGSNLGDRHSLLSAALEMLQTRVGRLLTLSRFYETEPWGFESPHPFLNAVVALRSELKPQDILHITQAIERELGRTQKSNGGVYHDRPIDIDILLHSVYPKVQSPELELPHPQMWQRDFVRMPLSDVAPWLHPEAPTPNL.

This sequence belongs to the HPPK family.

The enzyme catalyses 6-hydroxymethyl-7,8-dihydropterin + ATP = (7,8-dihydropterin-6-yl)methyl diphosphate + AMP + H(+). The protein operates within cofactor biosynthesis; tetrahydrofolate biosynthesis; 2-amino-4-hydroxy-6-hydroxymethyl-7,8-dihydropteridine diphosphate from 7,8-dihydroneopterin triphosphate: step 4/4. Catalyzes the transfer of pyrophosphate from adenosine triphosphate (ATP) to 6-hydroxymethyl-7,8-dihydropterin, an enzymatic step in folate biosynthesis pathway. This Porphyromonas gingivalis (strain ATCC 33277 / DSM 20709 / CIP 103683 / JCM 12257 / NCTC 11834 / 2561) protein is 2-amino-4-hydroxy-6-hydroxymethyldihydropteridine pyrophosphokinase (folK).